The following is a 178-amino-acid chain: Oligoribonuclease (178 aa).

Residues 7 to 168 enclose the Exonuclease domain; sequence LIWIDLEMTG…DDIRESIAEL (162 aa). Tyrosine 128 is a catalytic residue.

Belongs to the oligoribonuclease family.

Its subcellular location is the cytoplasm. Its function is as follows. 3'-to-5' exoribonuclease specific for small oligoribonucleotides. This Pseudomonas syringae pv. syringae (strain B728a) protein is Oligoribonuclease.